A 521-amino-acid polypeptide reads, in one-letter code: Glucose-1-phosphate adenylyltransferase small subunit, chloroplastic (521 aa).

The disordered stretch occupies residues 1-24 (MAASIGALKSSPSSHNCINERRND). The transit peptide at 1-72 (MAASIGALKS…RSPLIVSPKA (72 aa)) directs the protein to the chloroplast.

The protein belongs to the bacterial/plant glucose-1-phosphate adenylyltransferase family. In terms of assembly, heterotetramer.

The protein localises to the plastid. The protein resides in the chloroplast. The catalysed reaction is alpha-D-glucose 1-phosphate + ATP + H(+) = ADP-alpha-D-glucose + diphosphate. Its pathway is glycan biosynthesis; starch biosynthesis. Activated by 3'phosphoglycerate, inhibited by orthophosphate. Allosteric regulation. Its function is as follows. This protein plays a role in synthesis of starch. It catalyzes the synthesis of the activated glycosyl donor, ADP-glucose from Glc-1-P and ATP. The chain is Glucose-1-phosphate adenylyltransferase small subunit, chloroplastic from Solanum lycopersicum (Tomato).